The following is a 414-amino-acid chain: MSARKRIVVGVAGGIAAYKACTVVRQLTEAGHSVRVVPTESALRFVGAATFEALSGNPVHTGVFTDVHEVQHVRIGQQADLVVIAPATADLLARAVAGRADDLLTATLLTARCPVLFAPAMHTEMWLHPATVDNVATLRRRGAVVLEPASGRLTGADSGPGRLPEAEEITTLAQLLLERADALPYDMAGVKALVTAGGTREPLDPVRFIGNRSSGKQGYAVARVLAQRGADVTLIAGNTAGLIDPAGVEMVHIGSATQLRDAVSKHAPDANVLVMAAAVADFRPAHVAAAKIKKGASEPSSIDLVRNDDVLAGAVRARADGQLPNMRAIVGFAAETGDANGDVLFHARAKLERKGCDLLVVNAVGENRAFEVDHNDGWLLSADGTESALEHGSKTLMATRIVDSIAAFLKSQDG.

The tract at residues 1–191 (MSARKRIVVG…ALPYDMAGVK (191 aa)) is phosphopantothenoylcysteine decarboxylase. The segment at 192–414 (ALVTAGGTRE…IAAFLKSQDG (223 aa)) is phosphopantothenate--cysteine ligase. CTP contacts are provided by residues 275-277 (MAA), Asp-281, Lys-291, 293-294 (KK), 308-311 (DDVL), Phe-332, Lys-350, and Lys-354.

This sequence in the N-terminal section; belongs to the HFCD (homo-oligomeric flavin containing Cys decarboxylase) superfamily. The protein in the C-terminal section; belongs to the PPC synthetase family. Homododecamer. Requires Mg(2+) as cofactor. FMN is required as a cofactor.

It catalyses the reaction N-[(R)-4-phosphopantothenoyl]-L-cysteine + H(+) = (R)-4'-phosphopantetheine + CO2. The enzyme catalyses (R)-4'-phosphopantothenate + L-cysteine + CTP = N-[(R)-4-phosphopantothenoyl]-L-cysteine + CMP + diphosphate + H(+). It participates in cofactor biosynthesis; coenzyme A biosynthesis; CoA from (R)-pantothenate: step 2/5. The protein operates within cofactor biosynthesis; coenzyme A biosynthesis; CoA from (R)-pantothenate: step 3/5. With respect to regulation, two related chemical scaffolds that potently inhibit the activity of the CoaB moiety of CoaBC through a cryptic allosteric site that sits in the dimer interface region of the CoaB enzyme were identified. Functionally, catalyzes two sequential steps in the biosynthesis of coenzyme A. In the first step cysteine is conjugated to 4'-phosphopantothenate to form 4-phosphopantothenoylcysteine. In the second step the latter compound is decarboxylated to form 4'-phosphopantotheine. This chain is Coenzyme A biosynthesis bifunctional protein CoaBC, found in Mycolicibacterium smegmatis (strain ATCC 700084 / mc(2)155) (Mycobacterium smegmatis).